Here is a 723-residue protein sequence, read N- to C-terminus: uncharacterized protein (723 aa).

Residues 1 to 12 (MTGKKKNRHQKK) show a composition bias toward basic residues. 4 disordered regions span residues 1–166 (MTGK…EKEI), 181–212 (IKRKKEKKVKPQPVQPTPPVPAPAPQQSSGWG), 268–289 (LPLSDTEDSDNDNDNGGDDNDN), and 391–455 (KNKS…NTST). The span at 30–42 (DETTTTTTTTTTT) shows a compositional bias: low complexity. Basic and acidic residues-rich tracts occupy residues 45-129 (EETK…KTDD) and 149-166 (TDIKDEKKEEKKKVEKEI). Residues 53 to 173 (IVENKDEDKK…KEIEDPNKKY (121 aa)) are a coiled coil. Basic residues predominate over residues 181–190 (IKRKKEKKVK). Positions 193–204 (PVQPTPPVPAPA) are enriched in pro residues. The span at 272–288 (DTEDSDNDNDNGGDDND) shows a compositional bias: acidic residues. The span at 397–455 (DENNNNNNNNNQQQPQQQQTTSPTLSTSPTSPKSPTTTTTNTTTTTTTNTNNNNNNTST) shows a compositional bias: low complexity.

This is an uncharacterized protein from Dictyostelium discoideum (Social amoeba).